The primary structure comprises 258 residues: Octanoyltransferase (258 aa).

The BPL/LPL catalytic domain occupies 42–226 (NVGTDTLLLL…AVVAALDGEL (185 aa)). Substrate-binding positions include 80 to 87 (RGGKITWH), 156 to 158 (AIG), and 169 to 171 (GFS). Cys187 (acyl-thioester intermediate) is an active-site residue.

The protein belongs to the LipB family.

The protein resides in the cytoplasm. It carries out the reaction octanoyl-[ACP] + L-lysyl-[protein] = N(6)-octanoyl-L-lysyl-[protein] + holo-[ACP] + H(+). The protein operates within protein modification; protein lipoylation via endogenous pathway; protein N(6)-(lipoyl)lysine from octanoyl-[acyl-carrier-protein]: step 1/2. Its function is as follows. Catalyzes the transfer of endogenously produced octanoic acid from octanoyl-acyl-carrier-protein onto the lipoyl domains of lipoate-dependent enzymes. Lipoyl-ACP can also act as a substrate although octanoyl-ACP is likely to be the physiological substrate. This Rhodococcus jostii (strain RHA1) protein is Octanoyltransferase.